The primary structure comprises 238 residues: RxLR effector protein PITG_14788 (238 aa).

The first 23 residues, 1–23, serve as a signal peptide directing secretion; that stretch reads MKSLHAVNLVLLLLLACFAPAPA. The RxLR-dEER motif lies at 47 to 65; the sequence is RLLRAHSSGKEEQKEEEER.

Belongs to the RxLR effector family.

It localises to the secreted. The protein localises to the host cytoplasm. The protein resides in the host cytoskeleton. Its subcellular location is the host nucleus. It is found in the host nucleolus. Functionally, effector that enhances P.infestans colonization of Nicotiana benthamiana leaves. In Phytophthora infestans (strain T30-4) (Potato late blight agent), this protein is RxLR effector protein PITG_14788.